A 158-amino-acid polypeptide reads, in one-letter code: Cyclic pyranopterin monophosphate synthase (158 aa).

Substrate-binding positions include 76–78 (LCH) and 114–115 (ME). Residue aspartate 129 is part of the active site.

Belongs to the MoaC family. As to quaternary structure, homohexamer; trimer of dimers.

The enzyme catalyses (8S)-3',8-cyclo-7,8-dihydroguanosine 5'-triphosphate = cyclic pyranopterin phosphate + diphosphate. It participates in cofactor biosynthesis; molybdopterin biosynthesis. Catalyzes the conversion of (8S)-3',8-cyclo-7,8-dihydroguanosine 5'-triphosphate to cyclic pyranopterin monophosphate (cPMP). This is Cyclic pyranopterin monophosphate synthase from Shewanella sediminis (strain HAW-EB3).